We begin with the raw amino-acid sequence, 229 residues long: NAD-dependent protein deacetylase (229 aa).

The 229-residue stretch at 1-229 (MNNLKEAIKQ…NDAVKVFAEI (229 aa)) folds into the Deacetylase sirtuin-type domain. Positions 20, 32, 96, 98, 99, 114, 181, 182, 205, and 223 each coordinate NAD(+). Positions 98 and 99 each coordinate nicotinamide. H114 functions as the Proton acceptor in the catalytic mechanism.

This sequence belongs to the sirtuin family. Class U subfamily.

The protein localises to the cytoplasm. It carries out the reaction N(6)-acetyl-L-lysyl-[protein] + NAD(+) + H2O = 2''-O-acetyl-ADP-D-ribose + nicotinamide + L-lysyl-[protein]. Its function is as follows. NAD-dependent protein deacetylase which modulates the activities of several enzymes which are inactive in their acetylated form. The sequence is that of NAD-dependent protein deacetylase from Listeria innocua serovar 6a (strain ATCC BAA-680 / CLIP 11262).